A 488-amino-acid chain; its full sequence is UDP-N-acetylmuramate--L-alanine ligase (488 aa).

Residue 127–133 (GTHGKTT) coordinates ATP.

This sequence belongs to the MurCDEF family.

It is found in the cytoplasm. It catalyses the reaction UDP-N-acetyl-alpha-D-muramate + L-alanine + ATP = UDP-N-acetyl-alpha-D-muramoyl-L-alanine + ADP + phosphate + H(+). It participates in cell wall biogenesis; peptidoglycan biosynthesis. Cell wall formation. This chain is UDP-N-acetylmuramate--L-alanine ligase, found in Shewanella putrefaciens (strain CN-32 / ATCC BAA-453).